The following is a 295-amino-acid chain: Nucleotide-binding protein RBAM_031990 (295 aa).

16 to 23 (GMSGAGKT) contacts ATP. 67-70 (DLRG) provides a ligand contact to GTP.

This sequence belongs to the RapZ-like family.

In terms of biological role, displays ATPase and GTPase activities. The protein is Nucleotide-binding protein RBAM_031990 of Bacillus velezensis (strain DSM 23117 / BGSC 10A6 / LMG 26770 / FZB42) (Bacillus amyloliquefaciens subsp. plantarum).